Here is a 245-residue protein sequence, read N- to C-terminus: Aquaporin SIP1-1 (245 aa).

The next 2 membrane-spanning stretches (helical) occupy residues 14-34 and 55-75; these read AVVT…TAAV and LLSV…GASF. Positions 76–78 match the NPA 1 motif; that stretch reads NPT. 3 consecutive transmembrane segments (helical) span residues 100–120, 138–158, and 164–184; these read FPAQ…LMPA, GALA…WVIV, and VILK…AGAE. The short motif at 191-193 is the NPA 2 element; the sequence is NPA. A helical membrane pass occupies residues 213 to 233; that stretch reads VYWICPFIGAMLAGWIFRVVF.

The protein belongs to the MIP/aquaporin (TC 1.A.8) family. SIP (TC 1.A.8.10) subfamily.

It is found in the membrane. In terms of biological role, aquaporins facilitate the transport of water and small neutral solutes across cell membranes. In Zea mays (Maize), this protein is Aquaporin SIP1-1 (SIP1-1).